The primary structure comprises 172 residues: Adenine phosphoribosyltransferase (172 aa).

This sequence belongs to the purine/pyrimidine phosphoribosyltransferase family. As to quaternary structure, homodimer.

The protein resides in the cytoplasm. It carries out the reaction AMP + diphosphate = 5-phospho-alpha-D-ribose 1-diphosphate + adenine. It participates in purine metabolism; AMP biosynthesis via salvage pathway; AMP from adenine: step 1/1. In terms of biological role, catalyzes a salvage reaction resulting in the formation of AMP, that is energically less costly than de novo synthesis. This is Adenine phosphoribosyltransferase from Trichormus variabilis (strain ATCC 29413 / PCC 7937) (Anabaena variabilis).